A 1198-amino-acid polypeptide reads, in one-letter code: DNA polymerase (1198 aa).

3 disordered regions span residues 1–90, 179–198, and 906–931; these read MALV…TVVA, LEQP…QPNP, and ALAD…PSGT. Over residues 30–40 the composition is skewed to low complexity; it reads QQPPRAAPAPA.

Belongs to the DNA polymerase type-B family. As to quaternary structure, heterodimer with the terminal protein; this heterodimer binds to bp 9 to 18 of the genome. Forms a complex with viral pTP, DBP and hosts NFIA and POU2F1/OCT1 for initiation of replication.

Its subcellular location is the host nucleus. It catalyses the reaction DNA(n) + a 2'-deoxyribonucleoside 5'-triphosphate = DNA(n+1) + diphosphate. Its function is as follows. Eukaryotic-type DNA polymerase involved in viral genomic replication. DNA synthesis is protein primed, and acts in a strand displacement replication. Assembles in complex with viral pTP, DBP, host NFIA and host POU2F1/OCT1 on viral origin of replication. The polymerase covalently transfers dCMP onto pTP, thereby initiating complementary strand synthesis. This is DNA polymerase from Homo sapiens (Human).